Reading from the N-terminus, the 250-residue chain is L-ascorbate peroxidase 1, cytosolic (250 aa).

The active-site Proton acceptor is histidine 42. The segment at 113–137 (VPFHPGREDKPAPPPEGRLPDATKG) is disordered. Histidine 163 is a binding site for heme b. K(+) is bound by residues threonine 164, threonine 180, asparagine 182, and aspartate 187.

Belongs to the peroxidase family. Ascorbate peroxidase subfamily. Requires heme b as cofactor.

The protein resides in the cytoplasm. It carries out the reaction L-ascorbate + H2O2 = L-dehydroascorbate + 2 H2O. Its function is as follows. Plays a key role in hydrogen peroxide removal. In Oryza sativa subsp. indica (Rice), this protein is L-ascorbate peroxidase 1, cytosolic (APX1).